We begin with the raw amino-acid sequence, 101 residues long: Small ribosomal subunit protein uS14 (101 aa).

The protein belongs to the universal ribosomal protein uS14 family. In terms of assembly, part of the 30S ribosomal subunit. Contacts proteins S3 and S10.

Its function is as follows. Binds 16S rRNA, required for the assembly of 30S particles and may also be responsible for determining the conformation of the 16S rRNA at the A site. The protein is Small ribosomal subunit protein uS14 of Chelativorans sp. (strain BNC1).